Consider the following 121-residue polypeptide: Small ribosomal subunit protein bS6 (121 aa).

The protein belongs to the bacterial ribosomal protein bS6 family.

In terms of biological role, binds together with bS18 to 16S ribosomal RNA. The chain is Small ribosomal subunit protein bS6 from Pelagibacter ubique (strain HTCC1062).